A 229-amino-acid polypeptide reads, in one-letter code: UPF0758 protein Caur_3603 (229 aa).

The 123-residue stretch at 105–227 (PIRSPADVAT…YVSLRERGLG (123 aa)) folds into the MPN domain. Residues H176, H178, and D189 each contribute to the Zn(2+) site. The short motif at 176-189 (HNHPSGEPTPSMED) is the JAMM motif element.

This sequence belongs to the UPF0758 family.

The chain is UPF0758 protein Caur_3603 from Chloroflexus aurantiacus (strain ATCC 29366 / DSM 635 / J-10-fl).